The sequence spans 598 residues: NADH-quinone oxidoreductase subunit C/D (598 aa).

The segment at 1-188 is NADH dehydrogenase I subunit C; that stretch reads MTDSTTHDAL…DPFVLTKQKE (188 aa). Residues 212 to 598 are NADH dehydrogenase I subunit D; the sequence is DFMFLNLGPN…IDFVMSDVDR (387 aa).

The protein in the N-terminal section; belongs to the complex I 30 kDa subunit family. This sequence in the C-terminal section; belongs to the complex I 49 kDa subunit family. In terms of assembly, NDH-1 is composed of 13 different subunits. Subunits NuoB, CD, E, F, and G constitute the peripheral sector of the complex.

Its subcellular location is the cell inner membrane. The enzyme catalyses a quinone + NADH + 5 H(+)(in) = a quinol + NAD(+) + 4 H(+)(out). In terms of biological role, NDH-1 shuttles electrons from NADH, via FMN and iron-sulfur (Fe-S) centers, to quinones in the respiratory chain. The immediate electron acceptor for the enzyme in this species is believed to be ubiquinone. Couples the redox reaction to proton translocation (for every two electrons transferred, four hydrogen ions are translocated across the cytoplasmic membrane), and thus conserves the redox energy in a proton gradient. This is NADH-quinone oxidoreductase subunit C/D from Serratia proteamaculans (strain 568).